Consider the following 124-residue polypeptide: Mediator of RNA polymerase II transcription subunit 31 (124 aa).

The protein belongs to the Mediator complex subunit 31 family. Component of the Mediator complex.

The protein localises to the nucleus. Component of the Mediator complex, a coactivator involved in the regulated transcription of nearly all RNA polymerase II-dependent genes. Mediator functions as a bridge to convey information from gene-specific regulatory proteins to the basal RNA polymerase II transcription machinery. Mediator is recruited to promoters by direct interactions with regulatory proteins and serves as a scaffold for the assembly of a functional preinitiation complex with RNA polymerase II and the general transcription factors. This is Mediator of RNA polymerase II transcription subunit 31 (SOH1) from Kluyveromyces lactis (strain ATCC 8585 / CBS 2359 / DSM 70799 / NBRC 1267 / NRRL Y-1140 / WM37) (Yeast).